The primary structure comprises 396 residues: NADH-quinone oxidoreductase subunit D 1 (396 aa).

The protein belongs to the complex I 49 kDa subunit family. As to quaternary structure, NDH-1 is composed of 14 different subunits. Subunits NuoB, C, D, E, F, and G constitute the peripheral sector of the complex.

The protein resides in the cell inner membrane. It catalyses the reaction a quinone + NADH + 5 H(+)(in) = a quinol + NAD(+) + 4 H(+)(out). In terms of biological role, NDH-1 shuttles electrons from NADH, via FMN and iron-sulfur (Fe-S) centers, to quinones in the respiratory chain. The immediate electron acceptor for the enzyme in this species is believed to be ubiquinone. Couples the redox reaction to proton translocation (for every two electrons transferred, four hydrogen ions are translocated across the cytoplasmic membrane), and thus conserves the redox energy in a proton gradient. The sequence is that of NADH-quinone oxidoreductase subunit D 1 from Sinorhizobium medicae (strain WSM419) (Ensifer medicae).